Consider the following 292-residue polypeptide: Ribonuclease HIII (292 aa).

The RNase H type-2 domain maps to T76 to L292. A divalent metal cation contacts are provided by D82, E83, and D186.

This sequence belongs to the RNase HII family. RnhC subfamily. Mn(2+) is required as a cofactor. Mg(2+) serves as cofactor.

The protein localises to the cytoplasm. It carries out the reaction Endonucleolytic cleavage to 5'-phosphomonoester.. Its function is as follows. Endonuclease that specifically degrades the RNA of RNA-DNA hybrids. This Lactococcus lactis subsp. lactis (strain IL1403) (Streptococcus lactis) protein is Ribonuclease HIII.